The sequence spans 731 residues: Putative pentatricopeptide repeat-containing protein At1g17630 (731 aa).

PPR repeat units follow at residues 88-118 (SGSL…VSLV), 122-156 (DLRL…GLTG), 157-191 (DGYI…GLKE), 192-222 (NLHV…MPVR), 223-257 (NRMS…EFKP), 258-292 (DEVT…GNAV), 293-327 (SGEA…GFEE), 328-358 (YLPS…IRNK), 359-393 (GIES…NHVC), 398-432 (NVVT…KVLA), 433-467 (NSVT…SMSE), 468-498 (NILV…IRDK), 499-533 (DLIS…GFHP), 534-569 (DGIA…GLEP), and 570-600 (QQEH…MPME). Residues 605 to 680 (VLGALLNSCR…VSGSSWIEVK (76 aa)) form a type E motif region. Residues 681 to 711 (KKKYKFSSGSIVQSEFETIYPVLEDLVSHML) form a type E(+) motif region.

It belongs to the PPR family. PCMP-E subfamily.

In Arabidopsis thaliana (Mouse-ear cress), this protein is Putative pentatricopeptide repeat-containing protein At1g17630 (PCMP-E72).